The following is a 254-amino-acid chain: MATIKEIQQRLELVTDLADPFLAEAANDQRSGVQKAIEKRKRAIQAELDEDLRLEQMLRYEKELYKADYQAIAGIDEVGRGPLAGPVVAAAVILPPECKIKGLNDSKKIPKKKHQEIYQAVLDKALAVGVGLMNNEIIDQVNIYEATKLAMKEALSKLSLKPDYLLIDAMKLDVDIPQESIIKGDANSLSIAAASIVAKVTRDKLMADYDKKFPGYDFAKNAGYGTRSHLQGLERSGVTPIHRKTFEPIKSMYE.

The RNase H type-2 domain maps to 70–254 (QAIAGIDEVG…TFEPIKSMYE (185 aa)). Asp-76, Glu-77, and Asp-168 together coordinate a divalent metal cation.

This sequence belongs to the RNase HII family. Mn(2+) serves as cofactor. Mg(2+) is required as a cofactor.

The protein resides in the cytoplasm. The catalysed reaction is Endonucleolytic cleavage to 5'-phosphomonoester.. Its function is as follows. Endonuclease that specifically degrades the RNA of RNA-DNA hybrids. This chain is Ribonuclease HII, found in Streptococcus sanguinis (strain SK36).